The sequence spans 1035 residues: FACT complex subunit SPT16 (1035 aa).

Residues 208-234 adopt a coiled-coil conformation; it reads EELKITNAKLSDKIENKIDDVKFLKQL. A disordered region spans residues 448-496; that stretch reads NNEEEDNNKKKSSPATKVPSKPDRNSKILRTKLRGEARGGAEDAQKEQI. A compositionally biased stretch (basic and acidic residues) spans 480-496; the sequence is LRGEARGGAEDAQKEQI. S526 carries the post-translational modification Phosphoserine. Residues 636–666 adopt a coiled-coil conformation; that stretch reads MSETFKQIADLKKEATKREQERKALADVVQQ. Phosphoserine is present on S765. 2 disordered regions span residues 768-796 and 956-1035; these read SVDE…QEQE and GSDD…NFRD. A compositionally biased stretch (acidic residues) spans 957 to 1019; sequence SDDEASDESE…ESEEGEDWDE (63 aa). The stretch at 959–983 forms a coiled coil; sequence DEASDESEEEVSEYEASEDDVSDES. Basic and acidic residues predominate over residues 1020 to 1035; the sequence is LEKKAARADRGANFRD.

The protein belongs to the peptidase M24 family. SPT16 subfamily. In terms of assembly, forms a stable heterodimer with POB3. The SPT16-POB3 dimer weakly associates with multiple molecules of NHP6 (NHP6A or NHP6B) to form the FACT (yFACT or SNP) complex. The FACT complex interacts with the CK2 (casein kinase II) complex subunits CKA1, CKA2, CKB1 and CKB2 and the components of the transcription machinery CHD1, CTR9, PAF1 and CDC73. The FACT complex interacts with the PAF1 complex. Interacts with POL1. Interacts with SAS3. Interacts with YTA7.

It is found in the nucleus. Its subcellular location is the chromosome. Its function is as follows. Component of the FACT complex, a general chromatin factor that acts to reorganize nucleosomes. The FACT complex is involved in multiple processes that require DNA as a template such as mRNA elongation, DNA replication and DNA repair. During transcription elongation the FACT complex acts as a histone chaperone that both destabilizes and restores nucleosomal structure. It facilitates the passage of RNA polymerase II and transcription by promoting the dissociation of one histone H2A-H2B dimer from the nucleosome, then subsequently promotes the reestablishment of the nucleosome following the passage of RNA polymerase II. Transcription elongation is promoted by the repression of transcription initiation from cryptic sites. Also acts in establishing transcription initiation complexes and promotes SPT15/TBP-binding to a TATA box. Together with replication factor-A protein (RPA), FACT may play a role in nucleosome deposition during DNA replication. The protein is FACT complex subunit SPT16 (SPT16) of Saccharomyces cerevisiae (strain ATCC 204508 / S288c) (Baker's yeast).